Here is a 256-residue protein sequence, read N- to C-terminus: Small ribosomal subunit protein eS1 (256 aa).

Ala-2 carries the N-acetylalanine; partial modification.

This sequence belongs to the eukaryotic ribosomal protein eS1 family. As to quaternary structure, component of the small ribosomal subunit. Mature ribosomes consist of a small (40S) and a large (60S) subunit. The 40S subunit contains about 33 different proteins and 1 molecule of RNA (18S). The 60S subunit contains about 49 different proteins and 3 molecules of RNA (25S, 5.8S and 5S).

It is found in the cytoplasm. This Laccaria bicolor (strain S238N-H82 / ATCC MYA-4686) (Bicoloured deceiver) protein is Small ribosomal subunit protein eS1.